Reading from the N-terminus, the 79-residue chain is MENLSMDLLYMAAAVMMGLAAIGAAIGIGILGGKFLEGAARQPDLIPLLRTQFFIVMGLVDAIPMIAVGLGLYVMFAVA.

2 consecutive transmembrane segments (helical) span residues 11 to 31 (MAAA…IGIL) and 53 to 73 (FFIV…LGLY).

Belongs to the ATPase C chain family. In terms of assembly, F-type ATPases have 2 components, F(1) - the catalytic core - and F(0) - the membrane proton channel. F(1) has five subunits: alpha(3), beta(3), gamma(1), delta(1), epsilon(1). F(0) has three main subunits: a(1), b(2) and c(10-14). The alpha and beta chains form an alternating ring which encloses part of the gamma chain. F(1) is attached to F(0) by a central stalk formed by the gamma and epsilon chains, while a peripheral stalk is formed by the delta and b chains.

The protein resides in the cell inner membrane. F(1)F(0) ATP synthase produces ATP from ADP in the presence of a proton or sodium gradient. F-type ATPases consist of two structural domains, F(1) containing the extramembraneous catalytic core and F(0) containing the membrane proton channel, linked together by a central stalk and a peripheral stalk. During catalysis, ATP synthesis in the catalytic domain of F(1) is coupled via a rotary mechanism of the central stalk subunits to proton translocation. Functionally, key component of the F(0) channel; it plays a direct role in translocation across the membrane. A homomeric c-ring of between 10-14 subunits forms the central stalk rotor element with the F(1) delta and epsilon subunits. The protein is ATP synthase subunit c of Serratia proteamaculans (strain 568).